The sequence spans 371 residues: Dual-specificity RNA methyltransferase RlmN (371 aa).

Glu99 functions as the Proton acceptor in the catalytic mechanism. In terms of domain architecture, Radical SAM core spans 106–333; the sequence is DDNRATLCIS…AIRRASKGQD (228 aa). Cysteines 113 and 338 form a disulfide. 3 residues coordinate [4Fe-4S] cluster: Cys120, Cys124, and Cys127. Residues 165–166, Ser197, 219–221, and Asn295 each bind S-adenosyl-L-methionine; these read GE and SLN. Cys338 functions as the S-methylcysteine intermediate in the catalytic mechanism. The segment at 345–371 is disordered; sequence LTVSPPAQESERNSARPDRSQGKGKHL. Residues 353-365 are compositionally biased toward basic and acidic residues; it reads ESERNSARPDRSQ.

The protein belongs to the radical SAM superfamily. RlmN family. Requires [4Fe-4S] cluster as cofactor.

The protein localises to the cytoplasm. The enzyme catalyses adenosine(2503) in 23S rRNA + 2 reduced [2Fe-2S]-[ferredoxin] + 2 S-adenosyl-L-methionine = 2-methyladenosine(2503) in 23S rRNA + 5'-deoxyadenosine + L-methionine + 2 oxidized [2Fe-2S]-[ferredoxin] + S-adenosyl-L-homocysteine. It carries out the reaction adenosine(37) in tRNA + 2 reduced [2Fe-2S]-[ferredoxin] + 2 S-adenosyl-L-methionine = 2-methyladenosine(37) in tRNA + 5'-deoxyadenosine + L-methionine + 2 oxidized [2Fe-2S]-[ferredoxin] + S-adenosyl-L-homocysteine. Functionally, specifically methylates position 2 of adenine 2503 in 23S rRNA and position 2 of adenine 37 in tRNAs. m2A2503 modification seems to play a crucial role in the proofreading step occurring at the peptidyl transferase center and thus would serve to optimize ribosomal fidelity. This Syntrophotalea carbinolica (strain DSM 2380 / NBRC 103641 / GraBd1) (Pelobacter carbinolicus) protein is Dual-specificity RNA methyltransferase RlmN.